The chain runs to 716 residues: Forkhead box protein P2 (716 aa).

Over residues 1 to 28 (MMQESATETISNSSMNQNGMSTLSSQLD) the composition is skewed to polar residues. 2 disordered regions span residues 1–45 (MMQE…SEVS) and 286–340 (KHGG…TGAS). Residues 293–306 (TTNNSSSTTSSTTS) are compositionally biased toward low complexity. Polar residues predominate over residues 316 to 325 (SIVNGQSSVL). Residues 327–338 (ARRDSSSHEETG) show a composition bias toward basic and acidic residues. Residues 347–372 (GVCKWPGCESICEDFGQFLKHLNNEH) form a C2H2-type zinc finger. Positions 389–410 (VQQLEIQLSKERERLQAMMTHL) are leucine-zipper. The tract at residues 423–427 (PLNLV) is CTBP1-binding. The span at 439–460 (TSPQSLPQTPTTPTAPVTPITQ) shows a compositional bias: low complexity. Positions 439 to 466 (TSPQSLPQTPTTPTAPVTPITQGPSVIT) are disordered. The segment at residues 505-595 (RPPFTYATLI…SQKITGSPTL (91 aa)) is a DNA-binding region (fork-head). Disordered regions lie at residues 650-669 (LDHIDSNGNSSPGCSPQPHI) and 679-716 (VIAEDEDCPMSLVTTANHSPELEDDREIEEEPLSEDLE). Residues 700 to 716 (LEDDREIEEEPLSEDLE) are compositionally biased toward acidic residues.

Forms homodimers and heterodimers with FOXP1 and FOXP4. Dimerization is required for DNA-binding. Interacts with CTBP1. Interacts with FOXP1. Interacts with TBR1. Interacts with ZMYM2.

The protein localises to the nucleus. In terms of biological role, transcriptional repressor that may play a role in the specification and differentiation of lung epithelium. May also play a role in developing neural, gastrointestinal and cardiovascular tissues. Can act with CTBP1 to synergistically repress transcription but CTPBP1 is not essential. Plays a role in synapse formation by regulating SRPX2 levels. This is Forkhead box protein P2 (FOXP2) from Pan paniscus (Pygmy chimpanzee).